Reading from the N-terminus, the 1391-residue chain is DNA-directed RNA polymerase subunit beta (1391 aa).

It belongs to the RNA polymerase beta chain family. As to quaternary structure, the RNAP catalytic core consists of 2 alpha, 1 beta, 1 beta' and 1 omega subunit. When a sigma factor is associated with the core the holoenzyme is formed, which can initiate transcription.

It catalyses the reaction RNA(n) + a ribonucleoside 5'-triphosphate = RNA(n+1) + diphosphate. Its function is as follows. DNA-dependent RNA polymerase catalyzes the transcription of DNA into RNA using the four ribonucleoside triphosphates as substrates. The polypeptide is DNA-directed RNA polymerase subunit beta (Mycoplasma pneumoniae (strain ATCC 29342 / M129 / Subtype 1) (Mycoplasmoides pneumoniae)).